The sequence spans 109 residues: Insulin (109 aa).

A signal peptide spans M1–A24. 3 cysteine pairs are disulfide-bonded: C31/C93, C43/C106, and C92/C97. A propeptide spans E56–Q84 (c peptide).

This sequence belongs to the insulin family. As to quaternary structure, heterodimer of a B chain and an A chain linked by two disulfide bonds.

Its subcellular location is the secreted. In terms of biological role, insulin decreases blood glucose concentration. It increases cell permeability to monosaccharides, amino acids and fatty acids. It accelerates glycolysis, the pentose phosphate cycle, and glycogen synthesis in liver. The polypeptide is Insulin (INS) (Octodon degus (Degu)).